The chain runs to 487 residues: Probable aspartic-type endopeptidase opsB (487 aa).

An N-terminal signal peptide occupies residues 1–20 (MQKSWLVLLVACLGLQGTTA). The 330-residue stretch at 69-398 (YFCNITLGTP…DLSNNEISLA (330 aa)) folds into the Peptidase A1 domain. N-linked (GlcNAc...) asparagine glycosylation occurs at Asn72. Asp87 is an active-site residue. Residues Asn99, Asn111, Asn132, and Asn272 are each glycosylated (N-linked (GlcNAc...) asparagine). Asp286 is an active-site residue. 2 N-linked (GlcNAc...) asparagine glycosylation sites follow: Asn329 and Asn403. Residue Ala463 is the site of GPI-anchor amidated alanine attachment. A propeptide spans 464–487 (PAGPTDVPKHLVLGAAAIGYVLAF) (removed in mature form).

This sequence belongs to the peptidase A1 family.

It localises to the cell membrane. Its function is as follows. Probable GPI-anchored aspartic-type endopeptidase. This is Probable aspartic-type endopeptidase opsB (opsB) from Aspergillus oryzae (strain ATCC 42149 / RIB 40) (Yellow koji mold).